A 123-amino-acid chain; its full sequence is Ribosome-binding factor A (123 aa).

This sequence belongs to the RbfA family. In terms of assembly, monomer. Binds 30S ribosomal subunits, but not 50S ribosomal subunits or 70S ribosomes.

It is found in the cytoplasm. Its function is as follows. One of several proteins that assist in the late maturation steps of the functional core of the 30S ribosomal subunit. Associates with free 30S ribosomal subunits (but not with 30S subunits that are part of 70S ribosomes or polysomes). Required for efficient processing of 16S rRNA. May interact with the 5'-terminal helix region of 16S rRNA. The chain is Ribosome-binding factor A from Trichlorobacter lovleyi (strain ATCC BAA-1151 / DSM 17278 / SZ) (Geobacter lovleyi).